Reading from the N-terminus, the 282-residue chain is Bifunctional protein FolD (282 aa).

Residues 164-166 and serine 189 contribute to the NADP(+) site; that span reads GRS.

Belongs to the tetrahydrofolate dehydrogenase/cyclohydrolase family. In terms of assembly, homodimer.

It carries out the reaction (6R)-5,10-methylene-5,6,7,8-tetrahydrofolate + NADP(+) = (6R)-5,10-methenyltetrahydrofolate + NADPH. The enzyme catalyses (6R)-5,10-methenyltetrahydrofolate + H2O = (6R)-10-formyltetrahydrofolate + H(+). It functions in the pathway one-carbon metabolism; tetrahydrofolate interconversion. Its function is as follows. Catalyzes the oxidation of 5,10-methylenetetrahydrofolate to 5,10-methenyltetrahydrofolate and then the hydrolysis of 5,10-methenyltetrahydrofolate to 10-formyltetrahydrofolate. This Lactobacillus gasseri (strain ATCC 33323 / DSM 20243 / BCRC 14619 / CIP 102991 / JCM 1131 / KCTC 3163 / NCIMB 11718 / NCTC 13722 / AM63) protein is Bifunctional protein FolD.